A 1550-amino-acid polypeptide reads, in one-letter code: Protein TIME FOR COFFEE (1550 aa).

Disordered regions lie at residues 1–191 (MDRN…PVSP), 207–304 (VPRK…PVAV), 325–505 (TSKQ…SERG), 708–736 (QGSVLGRSSNPVQDKNSQSTSKSSETAQR), 779–805 (RPPNSGITSSGPTATSTSMNGSASATP), 859–1023 (FNGS…KAGV), 1086–1130 (ASLE…QSIA), 1163–1196 (ALPQSSGSLPTSHHQQLLQQQQQQHMQRSQSQQP), 1213–1296 (AASA…SVAA), and 1321–1435 (NSKP…PKHG). The segment covering 43–80 (EAARLRDRGGSNKKDRDRERDRDRERERERDRERDRLN) has biased composition (basic and acidic residues). The span at 100–118 (DGGDDSSEESVNDDEEYDD) shows a compositional bias: acidic residues. Residues 134-151 (SNNISAASFSSSLSNHHN) show a composition bias toward low complexity. A compositionally biased stretch (basic residues) spans 157–171 (LHHHHHSHNNNHQRK). The segment covering 241–250 (RQISSTSPAN) has biased composition (polar residues). The span at 292 to 301 (KSSSSKLSSP) shows a compositional bias: low complexity. A compositionally biased stretch (polar residues) spans 348–366 (RVSSPISNPQTLPQSSITL). The segment covering 367 to 379 (AANSSSSNVSAIA) has biased composition (low complexity). The segment covering 409–432 (SKSQVPFSNQLKSSGSGEGNSSVL) has biased composition (polar residues). Basic and acidic residues-rich tracts occupy residues 447–461 (DSEKKENNLSKDETI) and 473–490 (SDGEGAKSSSPEKEKFEI). Composition is skewed to polar residues over residues 713 to 736 (GRSSNPVQDKNSQSTSKSSETAQR), 783 to 803 (SGITSSGPTATSTSMNGSASA), and 884 to 992 (LTGQ…NLGL). Over residues 1112 to 1126 (SGGGAIGKTSGGNGG) the composition is skewed to gly residues. Over residues 1164-1173 (LPQSSGSLPT) the composition is skewed to polar residues. The span at 1174-1195 (SHHQQLLQQQQQQHMQRSQSQQ) shows a compositional bias: low complexity. Residues 1234-1253 (NMTTSPAGTTKFANANSGFP) show a composition bias toward polar residues. The segment covering 1254–1273 (QNLVQSSSNQVQSQQWKNNS) has biased composition (low complexity). Composition is skewed to polar residues over residues 1274–1296 (PRTTNTTQAQSPSMLSPSTSVAA), 1321–1342 (NSKPMTSGSPMQQVQGGTNHQA), and 1351–1360 (SPSTSSVSKN). The span at 1361-1382 (ASGSPRTTASASSAANKGGQAS) shows a compositional bias: low complexity. Composition is skewed to polar residues over residues 1383–1397 (TTTHSASQPSKNLQP) and 1405–1419 (GGRNNGPSVLGNPTT). The segment covering 1420–1435 (SSGSKSQQQQQLPKHG) has biased composition (low complexity).

In terms of assembly, interacts with MYC2.

It is found in the nucleus. Regulator of normal clock function. Acts in the mid to late night. Contributes to the amplitude of circadian clocks. May act on the transcriptional induction of LATE ELONGATED HYPOCOTYL (LHY). Inhibits MYC2 protein accumulation, acting as a negative factor in the JA-signaling pathway. The sequence is that of Protein TIME FOR COFFEE (TIC) from Arabidopsis thaliana (Mouse-ear cress).